A 171-amino-acid chain; its full sequence is Nicotinamide-nucleotide adenylyltransferase (171 aa).

It belongs to the archaeal NMN adenylyltransferase family.

The protein localises to the cytoplasm. It carries out the reaction beta-nicotinamide D-ribonucleotide + ATP + H(+) = diphosphate + NAD(+). It participates in cofactor biosynthesis; NAD(+) biosynthesis; NAD(+) from nicotinamide D-ribonucleotide: step 1/1. The protein is Nicotinamide-nucleotide adenylyltransferase of Methanococcus maripaludis (strain C5 / ATCC BAA-1333).